Here is a 729-residue protein sequence, read N- to C-terminus: 1,4-alpha-glucan branching enzyme GlgB 2 (729 aa).

Aspartate 408 acts as the Nucleophile in catalysis. Glutamate 461 acts as the Proton donor in catalysis.

Belongs to the glycosyl hydrolase 13 family. GlgB subfamily. As to quaternary structure, monomer.

The enzyme catalyses Transfers a segment of a (1-&gt;4)-alpha-D-glucan chain to a primary hydroxy group in a similar glucan chain.. It participates in glycan biosynthesis; glycogen biosynthesis. In terms of biological role, catalyzes the formation of the alpha-1,6-glucosidic linkages in glycogen by scission of a 1,4-alpha-linked oligosaccharide from growing alpha-1,4-glucan chains and the subsequent attachment of the oligosaccharide to the alpha-1,6 position. This Xanthomonas campestris pv. campestris (strain 8004) protein is 1,4-alpha-glucan branching enzyme GlgB 2.